Here is a 119-residue protein sequence, read N- to C-terminus: Large ribosomal subunit protein bL20 (119 aa).

The protein belongs to the bacterial ribosomal protein bL20 family.

Its function is as follows. Binds directly to 23S ribosomal RNA and is necessary for the in vitro assembly process of the 50S ribosomal subunit. It is not involved in the protein synthesizing functions of that subunit. This chain is Large ribosomal subunit protein bL20, found in Acidithiobacillus ferrooxidans (strain ATCC 23270 / DSM 14882 / CIP 104768 / NCIMB 8455) (Ferrobacillus ferrooxidans (strain ATCC 23270)).